A 247-amino-acid polypeptide reads, in one-letter code: uncharacterized protein (247 aa).

6 helical membrane passes run 19-39 (IFFT…SIMF), 73-93 (FFTS…AFFI), 106-126 (FLSF…YFII), 155-175 (YIQF…CPLF), 196-216 (YIYF…ILSQ), and 217-237 (FFLF…SCFY).

The protein belongs to the TatC family.

The protein localises to the mitochondrion membrane. This is an uncharacterized protein from Nephroselmis olivacea (Green alga).